Here is a 386-residue protein sequence, read N- to C-terminus: Lycopene beta-cyclase (386 aa).

Asp4 to Asp34 contacts NAD(+).

Belongs to the lycopene cyclase family. It depends on FAD as a cofactor.

It carries out the reaction a carotenoid psi-end group = a carotenoid beta-end derivative. The catalysed reaction is all-trans-lycopene = gamma-carotene. It catalyses the reaction gamma-carotene = all-trans-beta-carotene. It participates in carotenoid biosynthesis; astaxanthin biosynthesis. In terms of biological role, catalyzes the double cyclization reaction which converts lycopene to beta-carotene. This is Lycopene beta-cyclase from Paracoccus sp. (strain N81106 / MBIC 01143) (Agrobacterium aurantiacum).